A 484-amino-acid polypeptide reads, in one-letter code: MILNYIKKAKAAQQAIDHYTQEEIDKVCIAVGWEVYNDENILKLATSAVEETGMGNIPDKVAKHKNKVLGVLKDLKDAKSVGLIEEDFDKKIKKYAKPVGVVGALTPVTNPTATPASNGITILKGKNAVIFAPHPKAKLSTKMAVDFMREGLRKVGAPLDLIQVIEEPSLELTGELMKQVNVVLATGGGPMVKAAYSSGTPAYGVGPGNSVQIIAEDCDVLDAAKKVFTSKSFDHATSCSSENSVIVHESIYDRFVGELIRLGSYFVKNERKVLEEYMWIQNAKGYRSINPAIIAQSAKTIADSAGIKVSEEIKVLLVEGASDIEKDFFSQEKLSPVLTVFTYREFEEGYKILERLTNNYGTGHSCGIHTFNQEYIEKIGSRMKTSRVMVNQAQAAGNGGAFFNGMPSTVSLGCGSWGGNITSENITFKHFINVTWVSEYFTPKRPSDEEIFGDYLREVKAWSSTSIRQKQSLVNIRSPHQRVS.

NAD(+) is bound by residues leucine 105 to asparagine 110, glycine 188, and glycine 206. Cysteine 239 (nucleophile) is an active-site residue. Glutamate 332 and leucine 412 together coordinate NAD(+).

The protein belongs to the aldehyde dehydrogenase family.

The catalysed reaction is sulfoacetaldehyde + NAD(+) + CoA = sulfoacetyl-CoA + NADH + H(+). Part of a variant of the sulfo-TK pathway, a D-sulfoquinovose degradation pathway that produces sulfoacetate. Catalyzes the oxidation of sulfoacetaldehyde (SA) to sulfoacetyl-coenzyme A (sulfoacetyl-CoA). Is highly specific for NAD(+), with only residual (1%) activity with NADP(+). Cannot use acetaldehyde. This is Sulfoacetaldehyde dehydrogenase from Acholeplasma sp.